The following is a 315-amino-acid chain: Ribonuclease Z (315 aa).

Zn(2+) contacts are provided by histidine 61, histidine 63, aspartate 65, histidine 66, histidine 151, aspartate 219, and histidine 278. The active-site Proton acceptor is the aspartate 65.

Belongs to the RNase Z family. In terms of assembly, homodimer. Requires Zn(2+) as cofactor.

The catalysed reaction is Endonucleolytic cleavage of RNA, removing extra 3' nucleotides from tRNA precursor, generating 3' termini of tRNAs. A 3'-hydroxy group is left at the tRNA terminus and a 5'-phosphoryl group is left at the trailer molecule.. In terms of biological role, zinc phosphodiesterase, which displays some tRNA 3'-processing endonuclease activity. Probably involved in tRNA maturation, by removing a 3'-trailer from precursor tRNA. The chain is Ribonuclease Z from Clostridium botulinum (strain Alaska E43 / Type E3).